The chain runs to 302 residues: Glycine--tRNA ligase alpha subunit (302 aa).

It belongs to the class-II aminoacyl-tRNA synthetase family. Tetramer of two alpha and two beta subunits.

The protein localises to the cytoplasm. It carries out the reaction tRNA(Gly) + glycine + ATP = glycyl-tRNA(Gly) + AMP + diphosphate. This chain is Glycine--tRNA ligase alpha subunit, found in Edwardsiella ictaluri (strain 93-146).